The primary structure comprises 368 residues: tRNA-specific 2-thiouridylase MnmA (368 aa).

ATP contacts are provided by residues 24–31 (AMSGGVDS) and Leu50. Cys117 (nucleophile) is an active-site residue. Residues Cys117 and Cys213 are joined by a disulfide bond. Gly141 provides a ligand contact to ATP. The interval 163–165 (KDQ) is interaction with tRNA. Cys213 functions as the Cysteine persulfide intermediate in the catalytic mechanism.

This sequence belongs to the MnmA/TRMU family.

The protein resides in the cytoplasm. It catalyses the reaction S-sulfanyl-L-cysteinyl-[protein] + uridine(34) in tRNA + AH2 + ATP = 2-thiouridine(34) in tRNA + L-cysteinyl-[protein] + A + AMP + diphosphate + H(+). Functionally, catalyzes the 2-thiolation of uridine at the wobble position (U34) of tRNA, leading to the formation of s(2)U34. This chain is tRNA-specific 2-thiouridylase MnmA, found in Wolbachia pipientis subsp. Culex pipiens (strain wPip).